The chain runs to 378 residues: Quinolinate synthase (378 aa).

Residues His-59 and Ser-80 each contribute to the iminosuccinate site. Cys-125 serves as a coordination point for [4Fe-4S] cluster. Residues Tyr-151–Asn-153 and Ser-168 each bind iminosuccinate. Cys-212 contributes to the [4Fe-4S] cluster binding site. Residues His-238–Glu-240 and Thr-255 each bind iminosuccinate. Residue Cys-309 participates in [4Fe-4S] cluster binding.

The protein belongs to the quinolinate synthase family. Type 1 subfamily. [4Fe-4S] cluster is required as a cofactor.

Its subcellular location is the cytoplasm. The catalysed reaction is iminosuccinate + dihydroxyacetone phosphate = quinolinate + phosphate + 2 H2O + H(+). The protein operates within cofactor biosynthesis; NAD(+) biosynthesis; quinolinate from iminoaspartate: step 1/1. Catalyzes the condensation of iminoaspartate with dihydroxyacetone phosphate to form quinolinate. The protein is Quinolinate synthase of Burkholderia pseudomallei (strain 668).